Consider the following 481-residue polypeptide: MTQYTLKQASVLLQSKQISAVELASAYLAAIAEKNPALNGYITIDQDKTLAEARAADERIAQGNASALTGIPVAYKDIFCQTGWRSACASKMLDNFISSYTATVVQNLLDEGMVTLGRTNMDEFAMGSTNENSFYGATKNPWNPEHVPGGSSGGSAAVVAARLAPAALGSDTGGSIRQPASHCGITGIKPTYGTVSRFGMVAYASSFDQAGPMAQTAEDCAILLNAMAGFDPKDSTSLEREKEDYTRDLNQPLKGLKIGLPKEYFGEGNSADVLTALQNTIDLLKAQGAELIEVSLPQTKLSIPAYYVLASAEASTNLSRYDGVRYGHRAAQFGDLEEMYGKTRAEGFGSEVKRRIMIGTYVLSHGYYDAYYLKAQKLRRLVADDFQTVFARCDLILAPTAPTAAPKIGADSSPVETYLSDIYTIAVNLAGLPALTLPAGFSGGGLPVGVQLIGNYFAEARILGAAHQIQLNSDWHGKRPE.

Residues lysine 76 and serine 151 each act as charge relay system in the active site. Serine 175 (acyl-ester intermediate) is an active-site residue.

It belongs to the amidase family. GatA subfamily. In terms of assembly, heterotrimer of A, B and C subunits.

The catalysed reaction is L-glutamyl-tRNA(Gln) + L-glutamine + ATP + H2O = L-glutaminyl-tRNA(Gln) + L-glutamate + ADP + phosphate + H(+). Allows the formation of correctly charged Gln-tRNA(Gln) through the transamidation of misacylated Glu-tRNA(Gln) in organisms which lack glutaminyl-tRNA synthetase. The reaction takes place in the presence of glutamine and ATP through an activated gamma-phospho-Glu-tRNA(Gln). This is Glutamyl-tRNA(Gln) amidotransferase subunit A from Neisseria meningitidis serogroup C (strain 053442).